Reading from the N-terminus, the 815-residue chain is Capsid vertex component 1 (815 aa).

Disordered stretches follow at residues 227–280 and 795–815; these read THEQ…GDRE and RAPSDFSTTSTSGHESVTILY. 2 stretches are compositionally biased toward basic and acidic residues: residues 236–262 and 271–280; these read PPKEDEAASEAKKKEADDAMKKLKDAA and NRQREPGDRE. Polar residues predominate over residues 799–809; that stretch reads DFSTTSTSGHE.

The protein belongs to the herpesviridae CVC1 protein family. Interacts (via C-terminus) with capsid vertex component 2/CVC2.

Its subcellular location is the virion. It is found in the host nucleus. Capsid vertex-specific component that plays a role during viral DNA encapsidation, assuring correct genome cleavage and presumably stabilizing capsids that contain full-length viral genomes. This is Capsid vertex component 1 from Amazona oratrix (yellow-headed parrot).